A 751-amino-acid chain; its full sequence is Semaphorin-3C (751 aa).

Positions 1 to 20 (MAFRTICVLVGVFICSICVK) are cleaved as a signal peptide. Residues 28-511 (RVYLTFDELR…SNEGVSQVSL (484 aa)) enclose the Sema domain. N-linked (GlcNAc...) asparagine glycosylation occurs at Asn-81. Cys-101 and Cys-112 form a disulfide bridge. N-linked (GlcNAc...) asparagine glycosylation occurs at Asn-123. Cys-130 and Cys-139 are joined by a disulfide. 2 N-linked (GlcNAc...) asparagine glycosylation sites follow: Asn-252 and Asn-268. 2 disulfides stabilise this stretch: Cys-266/Cys-378 and Cys-290/Cys-338. A glycan (N-linked (GlcNAc...) asparagine) is linked at Asn-465. Cysteines 514 and 532 form a disulfide. The region spanning 571-655 (AYRNAAEIVQ…TENSFKQTIA (85 aa)) is the Ig-like C2-type domain. Residues Asn-585 and Asn-586 are each glycosylated (N-linked (GlcNAc...) asparagine). An intrachain disulfide couples Cys-643 to Cys-709. The span at 712 to 731 (TRQQHQQGDESQKMRGDYGK) shows a compositional bias: basic and acidic residues. The tract at residues 712–751 (TRQQHQQGDESQKMRGDYGKLKALINSRKSRNRRNQLPES) is disordered.

It belongs to the semaphorin family. In terms of assembly, interacts with PLXND1. Expressed intensely in the heart, skeletal muscle, colon, small intestine, ovary, testis, and prostate. Faint expression ubiquitously among other organs, including brain.

The protein localises to the secreted. Binds to plexin family members and plays an important role in the regulation of developmental processes. Required for normal cardiovascular development during embryogenesis. Functions as attractant for growing axons, and thereby plays an important role in axon growth and axon guidance. The protein is Semaphorin-3C (SEMA3C) of Homo sapiens (Human).